A 136-amino-acid polypeptide reads, in one-letter code: Large ribosomal subunit protein uL16 (136 aa).

The protein belongs to the universal ribosomal protein uL16 family. As to quaternary structure, part of the 50S ribosomal subunit.

Binds 23S rRNA and is also seen to make contacts with the A and possibly P site tRNAs. The polypeptide is Large ribosomal subunit protein uL16 (Sodalis glossinidius (strain morsitans)).